The chain runs to 513 residues: MTLTLTPGAATLAQLQDIWANNRAVTLCPSAHAGIKAAQALVAKAAAGDDAVYGVNTGFGKLASVKIAAKDVATLQRNLILSHCCGVGEPLDAATTRLMMVLKLLSLGRGASGVAMTTLEIIENMLARGVTPVIPSQGSVGASGDLAPLAHMAAAMIGEGEAVFEGTRMAAGDALRRAGITPIVLGAKEGLALINGTQFSTACALVGLWGAWRNAATCVLTCALSTDAIMGSTAPLQDAIHTLRGHAGQIAVARAQRALMAGSQIRESHVEGDTRVQDPYCIRCQPQVTGAAMDILHFAGRTLEIEANAVTDNPLVLVEDELIVSGGNFHAEPVGFAADQIAVAVSELGAIAQRRVALMVDPTLSFDLPPFLTPDPGLNSGLMIAEVTTAALMSENKHLANPCTTDSTPTSANQEDHVSMAAHAARRLLRMNANLNVILGVEAMCGAQGIEFRAPLETSAPLKAAMAVLRAHVPTIAEDRYMAPSIEAASALVANGTLAACVDLPAFVKGEAA.

The 5-imidazolinone (Ala-Gly) cross-link spans 142–144 (ASG). Residue Ser-143 is modified to 2,3-didehydroalanine (Ser).

The protein belongs to the PAL/histidase family. Post-translationally, contains an active site 4-methylidene-imidazol-5-one (MIO), which is formed autocatalytically by cyclization and dehydration of residues Ala-Ser-Gly.

It is found in the cytoplasm. It carries out the reaction L-histidine = trans-urocanate + NH4(+). The protein operates within amino-acid degradation; L-histidine degradation into L-glutamate; N-formimidoyl-L-glutamate from L-histidine: step 1/3. In Roseobacter denitrificans (strain ATCC 33942 / OCh 114) (Erythrobacter sp. (strain OCh 114)), this protein is Histidine ammonia-lyase.